The following is a 473-amino-acid chain: Gamma-aminobutyric acid receptor subunit beta-3 (473 aa).

A signal peptide spans 1–25; sequence MWGLAGGRLFGIFSAPVLVAVVCCA. The Extracellular portion of the chain corresponds to 26-246; sequence QSVNDPGNMS…FRLKRNIGYF (221 aa). 2 N-linked (GlcNAc...) asparagine glycosylation sites follow: N33 and N105. 120–122 is a benzamidine binding site; that stretch reads DTY. Y122 serves as a coordination point for 4-aminobutanoate. Y122 is a histamine binding site. A disulfide bridge connects residues C161 and C175. A glycan (N-linked (GlcNAc...) asparagine) is linked at N174. Residues E180 and Y182 each contribute to the 4-aminobutanoate site. Benzamidine-binding positions include 180 to 182 and F225; that span reads ESY. 181-182 lines the histamine pocket; the sequence is SY. Residue T227 participates in 4-aminobutanoate binding. T227 is a binding site for histamine. A helical membrane pass occupies residues 247–267; the sequence is ILQTYMPSILITILSWVSFWI. Residues 268 to 271 lie on the Cytoplasmic side of the membrane; it reads NYDA. The chain crosses the membrane as a helical span at residues 272 to 292; the sequence is SAARVALGITTVLTMTTINTH. Residues 293-304 lie on the Extracellular side of the membrane; sequence LRETLPKIPYVK. Residues 305–328 form a helical membrane-spanning segment; sequence AIDMYLMGCFVFVFLALLEYAFVN. Over 329–447 the chain is Cytoplasmic; it reads YIFFGRGPQR…KIPDLTDVNA (119 aa). A helical membrane pass occupies residues 448-470; the sequence is IDRWSRIVFPFTFSLFNLVYWLY. Topologically, residues 471 to 473 are extracellular; that stretch reads YVN.

This sequence belongs to the ligand-gated ion channel (TC 1.A.9) family. Gamma-aminobutyric acid receptor (TC 1.A.9.5) subfamily. GABRB3 sub-subfamily. As to quaternary structure, heteropentamer, formed by a combination of alpha (GABRA1-6), beta (GABRB1-3), gamma (GABRG1-3), delta (GABRD), epsilon (GABRE), rho (GABRR1-3), pi (GABRP) and theta (GABRQ) chains, each subunit exhibiting distinct physiological and pharmacological properties. Can form functional homopentamers (in vitro). Interacts with UBQLN1. May interact with KIF21B. Identified in a complex of 720 kDa composed of LHFPL4, NLGN2, GABRA1, GABRB2, GABRG2 and GABRB3. Interacts with LHFPL4. Interacts with GIT1; this interaction is required for synaptic GABRB3 surface stability and inhibitory synapse strength.

The protein localises to the postsynaptic cell membrane. The protein resides in the cell membrane. Its subcellular location is the cytoplasmic vesicle membrane. It carries out the reaction chloride(in) = chloride(out). Its activity is regulated as follows. Potentiated by histamine. Its function is as follows. Beta subunit of the heteropentameric ligand-gated chloride channel gated by gamma-aminobutyric acid (GABA), a major inhibitory neurotransmitter in the brain. GABA-gated chloride channels, also named GABA(A) receptors (GABAAR), consist of five subunits arranged around a central pore and contain GABA active binding site(s) located at the alpha and beta subunit interface(s). GABAARs containing beta-3/GABRB3 subunit are found at both synaptic and extrasynaptic sites. When activated by GABA, GABAARs selectively allow the flow of chloride anions across the cell membrane down their electrochemical gradient. Chloride influx into the postsynaptic neuron following GABAAR opening decreases the neuron ability to generate a new action potential, thereby reducing nerve transmission. GABAARs containing alpha-1 and beta-3 subunits exhibit synaptogenic activity; the gamma-2 subunit being necessary but not sufficient to induce rapid synaptic contacts formation. Extrasynaptic beta-3 receptors contribute to the tonic GABAergic inhibition. GABAARs containing alpha-1, beta-3 and epsilon subunits may also permit spontaneous chloride channel activity while preserving the structural information required for GABA-gated openings. Beta-containing GABAARs can simultaneously bind GABA and histamine where histamine binds at the interface of two neighboring beta subunits, which may be involved in the regulation of sleep and wakefulness. Plays an important role in somatosensation and in the production of antinociception. The sequence is that of Gamma-aminobutyric acid receptor subunit beta-3 from Homo sapiens (Human).